Reading from the N-terminus, the 229-residue chain is Heptaprenylglyceryl phosphate synthase (229 aa).

Mg(2+)-binding residues include Asp-13 and Thr-39.

The protein belongs to the GGGP/HepGP synthase family. Homodimer. The cofactor is Mg(2+).

The catalysed reaction is sn-glycerol 1-phosphate + all-trans-heptaprenyl diphosphate = 3-heptaprenyl-sn-glycero-1-phosphate + diphosphate. The protein operates within membrane lipid metabolism; glycerophospholipid metabolism. In terms of biological role, prenyltransferase that catalyzes in vivo the transfer of the heptaprenyl moiety of heptaprenyl pyrophosphate (HepPP; 35 carbon atoms) to the C3 hydroxyl of sn-glycerol-1-phosphate (G1P), producing heptaprenylglyceryl phosphate (HepGP). This reaction is an ether-bond-formation step in the biosynthesis of archaea-type G1P-based membrane lipids found in Bacillales. This is Heptaprenylglyceryl phosphate synthase from Lysinibacillus sphaericus (strain C3-41).